A 1568-amino-acid polypeptide reads, in one-letter code: Plexin-C1 (1568 aa).

Residues 1-34 (MEVSRRKAPPRPPRPAAPLPLLAYLLALAAPGRG) form the signal peptide. The 418-residue stretch at 35 to 452 (ADEPVWRSEQ…AGKEVRRIRV (418 aa)) folds into the Sema domain. Residues 35 to 944 (ADEPVWRSEQ…YVEQESVPST (910 aa)) are Extracellular-facing. C64 and C87 are joined by a disulfide. N-linked (GlcNAc...) asparagine glycosylation is found at N86, N141, and N149. Cystine bridges form between C156-C194, C226-C354, and C283-C329. 2 N-linked (GlcNAc...) asparagine glycosylation sites follow: N241 and N252. N386 and N407 each carry an N-linked (GlcNAc...) asparagine glycan. Disulfide bonds link C455/C472, C461/C506, C464/C481, and C475/C487. N-linked (GlcNAc...) asparagine glycans are attached at residues N548, N582, N653, N692, N771, N796, N821, N871, and N890. The chain crosses the membrane as a helical span at residues 945-965 (WYFLIVLPVLLVIVIFAAVGV). Residues 966 to 1568 (TRHKSKELSR…FDEKKKCKWM (603 aa)) are Cytoplasmic-facing. S978 carries the post-translational modification Phosphoserine.

Belongs to the plexin family. In terms of assembly, monomer. Homodimer. Interacts with SEMA7A. In terms of processing, N-glycosylated. In terms of tissue distribution, detected in heart, brain, lung, spleen and placenta.

The protein localises to the membrane. Functionally, receptor for SEMA7A, for smallpox semaphorin A39R, vaccinia virus semaphorin A39R and for herpesvirus Sema protein. Binding of semaphorins triggers cellular responses leading to the rearrangement of the cytoskeleton and to secretion of IL6 and IL8. The protein is Plexin-C1 (PLXNC1) of Homo sapiens (Human).